The primary structure comprises 962 residues: Ran-binding proteins 9/10 homolog (962 aa).

Low complexity-rich tracts occupy residues 1–33 (MENV…LSQS) and 41–52 (APSTSRSHSHSP). 3 disordered regions span residues 1–246 (MENV…EQQP), 271–296 (EDDD…EVAS), and 313–402 (SSAS…QGVD). Residues 80-91 (TEARENSPHDHS) are compositionally biased toward basic and acidic residues. Positions 118–132 (QQQQEAPPLQQDQQE) are enriched in low complexity. A compositionally biased stretch (polar residues) spans 146–164 (DQQNQEYPAVHQDQQAEQN). A compositionally biased stretch (basic and acidic residues) spans 165-202 (QELHHIEGLIRHRESQNPEEHPPQASLENRETLGREDT). The segment covering 236 to 245 (SGSQDLNEQQ) has biased composition (polar residues). The span at 271 to 284 (EDDDEEVDEEEEVV) shows a compositional bias: acidic residues. Residues 321–343 (SSNNNNNNISNHNNNNNNSNSNS) are compositionally biased toward low complexity. Polar residues-rich tracts occupy residues 351–360 (FYSNNGSHFS) and 368–378 (NPRSSTQTSSP). Phosphoserine is present on residues serine 387, serine 393, and serine 395. Positions 389–398 (PAASSNSPQH) are enriched in polar residues. Positions 400–587 (GVDPLRLLYP…VDANFGQEPF (188 aa)) constitute a B30.2/SPRY domain. In terms of domain architecture, LisH spans 617–649 (PENLMNRLVSTYLVHNAFSKTAEAFNGYTNQTF). A CTLH domain is found at 655–712 (SIKTRQKIIKLILTGKMSQAIEHTLRSFPGLLENNKNLWFALKCRQFIEMINGADIEN). Residues 800-820 (EMEPCQSHSNGGDSSSNGNAS) form a disordered region. Over residues 806–820 (SHSNGGDSSSNGNAS) the composition is skewed to low complexity.

It belongs to the RANBP9/10 family. As to expression, expressed in the GSCs and in dividing cysts. Expression is reduced in the germline as individual egg chambers are formed. Isoform C is expressed in all somatic and germline cells of the ovary. Isoform D is expressed in the GSC niche.

It localises to the cytoplasm. Its subcellular location is the membrane. The protein resides in the nucleus. In terms of biological role, may be involved in JAK/STAT signaling. Isoform D is required for the proper arrangement of niche cells and is autonomously required for proper niche cell size, isoform C negatively regulates the adhesive properties of the niche. The germline stem cell (GSC) niche in ovaries is made up of two somatic cell types: 8-9 cells in a single-filed array make up the terminal filament (TF), and a tight cluster of 5 or 6 cap cells (CpC). Regulating the size and adhesive properties of the CpCs is an important component of the mechanism that controls their capacity to support stem cells, isoform C and isoform D are important factors in mediating this regulation. In contrast, isoform C acts as a positive regulator of cell adhesion in follicle cell epithelium. The sequence is that of Ran-binding proteins 9/10 homolog (RanBPM) from Drosophila melanogaster (Fruit fly).